The primary structure comprises 1503 residues: E3 ubiquitin-protein ligase listerin (1503 aa).

HEAT repeat units lie at residues 52 to 89 (SGID…ETSS), 93 to 129 (CYEH…KLEK), 133 to 170 (KGLK…ADKK), 280 to 318 (LNTP…SAQF), 323 to 345 (SLQN…HWRV), 346 to 384 (LQHF…NLPW), 552 to 589 (GDIV…TGGS), 640 to 663 (AENV…NEAE), 664 to 700 (KNVL…DFNS), 845 to 882 (LEKR…LDDS), 1022 to 1065 (TLFI…RMFR), 1078 to 1117 (RTLL…SLLE), 1141 to 1183 (AAAK…VMIS), and 1302 to 1340 (FKSI…KLLI). An RING-type zinc finger spans residues 1446 to 1499 (CTICMMTVHQQTNQLPKVKCKQCKNRFHSNCLVSSFHTYKWFESSNQSTCPLCR).

This sequence belongs to the LTN1 family. In terms of assembly, component of the ribosome quality control complex (RQC), composed of at least the E3 ubiquitin ligase ltn1 and nemf. The complex probably also contains tcf25 as well as vcp/p97 and its ubiquitin-binding cofactors. RQC forms a stable complex with 60S ribosomal subunits.

The protein resides in the cytoplasm. The protein localises to the cytosol. It catalyses the reaction S-ubiquitinyl-[E2 ubiquitin-conjugating enzyme]-L-cysteine + [acceptor protein]-L-lysine = [E2 ubiquitin-conjugating enzyme]-L-cysteine + N(6)-ubiquitinyl-[acceptor protein]-L-lysine.. It functions in the pathway protein modification; protein ubiquitination. E3 ubiquitin-protein ligase. Component of the ribosome quality control complex (RQC), a ribosome-associated complex that mediates ubiquitination and extraction of incompletely synthesized nascent chains for proteasomal degradation. Ubiquitination leads to vcp/p97 recruitment for extraction and degradation of the incomplete translation product. In Caenorhabditis briggsae, this protein is E3 ubiquitin-protein ligase listerin.